The chain runs to 287 residues: Pyridoxal kinase PdxY (287 aa).

Residues S10 and 45-46 (TQ) contribute to the substrate site. ATP is bound by residues D112, A144, E149, K182, and 209 to 212 (RPLV). D224 contacts substrate.

The protein belongs to the pyridoxine kinase family. PdxY subfamily. Homodimer. It depends on Mg(2+) as a cofactor.

The catalysed reaction is pyridoxal + ATP = pyridoxal 5'-phosphate + ADP + H(+). Its pathway is cofactor metabolism; pyridoxal 5'-phosphate salvage; pyridoxal 5'-phosphate from pyridoxal: step 1/1. Pyridoxal kinase involved in the salvage pathway of pyridoxal 5'-phosphate (PLP). Catalyzes the phosphorylation of pyridoxal to PLP. The protein is Pyridoxal kinase PdxY of Shigella flexneri.